We begin with the raw amino-acid sequence, 278 residues long: Pantothenate synthetase (278 aa).

27-34 provides a ligand contact to ATP; it reads MGYLHEGH. The active-site Proton donor is the His34. A (R)-pantoate-binding site is contributed by Gln58. Beta-alanine is bound at residue Gln58. 144–147 is an ATP binding site; it reads GQKD. Gln150 provides a ligand contact to (R)-pantoate. Residues Val173 and 181–184 contribute to the ATP site; that span reads MSSR.

Belongs to the pantothenate synthetase family. In terms of assembly, homodimer.

It localises to the cytoplasm. The enzyme catalyses (R)-pantoate + beta-alanine + ATP = (R)-pantothenate + AMP + diphosphate + H(+). Its pathway is cofactor biosynthesis; (R)-pantothenate biosynthesis; (R)-pantothenate from (R)-pantoate and beta-alanine: step 1/1. Its function is as follows. Catalyzes the condensation of pantoate with beta-alanine in an ATP-dependent reaction via a pantoyl-adenylate intermediate. The polypeptide is Pantothenate synthetase (Roseiflexus sp. (strain RS-1)).